Consider the following 191-residue polypeptide: Ciliary microtubule-associated protein 3 (191 aa).

Interacts with proteins involved in ciliary transport, including ARL13B, CETN1, KIF3A, RAB6A, RAB8A, TUBB1 and TUBG1. Interacts with AURKA.

It is found in the cytoplasmic vesicle. Its subcellular location is the golgi apparatus. The protein resides in the trans-Golgi network. It localises to the cytoplasm. During primary cilia disassembly, involved in cilia disassembly. Required specifically to control cilia retraction as well as the liberation and duplication of the basal body/centrosome. May act by stimulating AURKA activity at the basal body in a cell cycle-dependent manner. The chain is Ciliary microtubule-associated protein 3 from Homo sapiens (Human).